The sequence spans 240 residues: MKPDVLLYNSQHLINNITLYQLNHINIASFSFVFFSGLFTSFSPCLISILPICIMYISGEGQKLSQIDKLKNLFFFCLGAISSFTTLGLIATLLAKTYSQLFNGIPVISALVIIYMGFSLLNIVPLSTNNLNTRINNTNQNIKMYLSGVGIGLAISSCSTPIFVTLLIWVTSNHNLFIGLIFILIYSIGYIFPIIIGSLFSSRFLTTASSPFLNNLWAPFSGTILLSAGTFSLFSSILKY.

Transmembrane regions (helical) follow at residues 32 to 52, 74 to 94, 104 to 124, 149 to 169, 176 to 196, and 218 to 238; these read FVFFSGLFTSFSPCLISILPI, FFFCLGAISSFTTLGLIATLL, GIPVISALVIIYMGFSLLNIV, VGIGLAISSCSTPIFVTLLIW, LFIGLIFILIYSIGYIFPIII, and APFSGTILLSAGTFSLFSSIL.

This sequence belongs to the DsbD family.

It localises to the plastid. The protein localises to the chloroplast membrane. Its function is as follows. Could be involved in cytochrome c synthesis. This Porphyra purpurea (Red seaweed) protein is Putative cytochrome c-type biogenesis protein DbsD-like.